Reading from the N-terminus, the 220-residue chain is Cytidylate kinase (220 aa).

9–17 (GPAASGKST) provides a ligand contact to ATP.

It belongs to the cytidylate kinase family. Type 1 subfamily.

The protein localises to the cytoplasm. It carries out the reaction CMP + ATP = CDP + ADP. It catalyses the reaction dCMP + ATP = dCDP + ADP. This chain is Cytidylate kinase, found in Thermotoga neapolitana (strain ATCC 49049 / DSM 4359 / NBRC 107923 / NS-E).